Reading from the N-terminus, the 235-residue chain is RING-H2 finger protein ATL33 (235 aa).

A helical transmembrane segment spans residues 64–84; sequence LIFVVIAFVAVPALVYALFFN. The disordered stretch occupies residues 87–133; that stretch reads CSSSRRNSSSSRTSSSSDDTPHATVDTPPITETTVTSESGGKFHKDT. Over residues 88–103 the composition is skewed to low complexity; sequence SSSRRNSSSSRTSSSS. A compositionally biased stretch (polar residues) spans 116–125; sequence ITETTVTSES. The segment at 142–184 adopts an RING-type; atypical zinc-finger fold; it reads CSVCLMVFTDSDELRQLSECKHAFHVLCIETWLKDHPNCPICR. A compositionally biased stretch (low complexity) spans 201–216; that stretch reads NVNGNVNRSGGNRRVS. The tract at residues 201–235 is disordered; sequence NVNGNVNRSGGNRRVSATSRDDDWRQGLPDASSLV.

It belongs to the RING-type zinc finger family. ATL subfamily.

The protein resides in the membrane. It catalyses the reaction S-ubiquitinyl-[E2 ubiquitin-conjugating enzyme]-L-cysteine + [acceptor protein]-L-lysine = [E2 ubiquitin-conjugating enzyme]-L-cysteine + N(6)-ubiquitinyl-[acceptor protein]-L-lysine.. It functions in the pathway protein modification; protein ubiquitination. The sequence is that of RING-H2 finger protein ATL33 (ATL33) from Arabidopsis thaliana (Mouse-ear cress).